The chain runs to 874 residues: Alanine--tRNA ligase (874 aa).

His-562, His-566, Cys-664, and His-668 together coordinate Zn(2+).

This sequence belongs to the class-II aminoacyl-tRNA synthetase family. Requires Zn(2+) as cofactor.

The protein resides in the cytoplasm. The catalysed reaction is tRNA(Ala) + L-alanine + ATP = L-alanyl-tRNA(Ala) + AMP + diphosphate. Its function is as follows. Catalyzes the attachment of alanine to tRNA(Ala) in a two-step reaction: alanine is first activated by ATP to form Ala-AMP and then transferred to the acceptor end of tRNA(Ala). Also edits incorrectly charged Ser-tRNA(Ala) and Gly-tRNA(Ala) via its editing domain. This chain is Alanine--tRNA ligase, found in Neisseria meningitidis serogroup B (strain ATCC BAA-335 / MC58).